Here is a 101-residue protein sequence, read N- to C-terminus: Phosphoribosyl-AMP cyclohydrolase (101 aa).

A Mg(2+)-binding site is contributed by aspartate 71. Cysteine 72 is a binding site for Zn(2+). Aspartate 73 and aspartate 75 together coordinate Mg(2+). Residues cysteine 88 and cysteine 95 each contribute to the Zn(2+) site.

This sequence belongs to the PRA-CH family. Homodimer. Mg(2+) is required as a cofactor. It depends on Zn(2+) as a cofactor.

Its subcellular location is the cytoplasm. The enzyme catalyses 1-(5-phospho-beta-D-ribosyl)-5'-AMP + H2O = 1-(5-phospho-beta-D-ribosyl)-5-[(5-phospho-beta-D-ribosylamino)methylideneamino]imidazole-4-carboxamide. The protein operates within amino-acid biosynthesis; L-histidine biosynthesis; L-histidine from 5-phospho-alpha-D-ribose 1-diphosphate: step 3/9. In terms of biological role, catalyzes the hydrolysis of the adenine ring of phosphoribosyl-AMP. This Bacillus cereus (strain ATCC 14579 / DSM 31 / CCUG 7414 / JCM 2152 / NBRC 15305 / NCIMB 9373 / NCTC 2599 / NRRL B-3711) protein is Phosphoribosyl-AMP cyclohydrolase.